The following is a 341-amino-acid chain: Phosphoribosylformylglycinamidine cyclo-ligase (341 aa).

Belongs to the AIR synthase family.

It localises to the cytoplasm. The enzyme catalyses 2-formamido-N(1)-(5-O-phospho-beta-D-ribosyl)acetamidine + ATP = 5-amino-1-(5-phospho-beta-D-ribosyl)imidazole + ADP + phosphate + H(+). The protein operates within purine metabolism; IMP biosynthesis via de novo pathway; 5-amino-1-(5-phospho-D-ribosyl)imidazole from N(2)-formyl-N(1)-(5-phospho-D-ribosyl)glycinamide: step 2/2. The polypeptide is Phosphoribosylformylglycinamidine cyclo-ligase (Picosynechococcus sp. (strain ATCC 27264 / PCC 7002 / PR-6) (Agmenellum quadruplicatum)).